The chain runs to 181 residues: Probable Brix domain-containing ribosomal biogenesis protein (181 aa).

Residues 5 to 181 enclose the Brix domain; sequence CKVIITTSRE…RIKKVVYRHV (177 aa).

Probably involved in the biogenesis of the ribosome. This chain is Probable Brix domain-containing ribosomal biogenesis protein, found in Pyrobaculum aerophilum (strain ATCC 51768 / DSM 7523 / JCM 9630 / CIP 104966 / NBRC 100827 / IM2).